The chain runs to 658 residues: Integrator complex subunit 9 (658 aa).

K58 is covalently cross-linked (Glycyl lysine isopeptide (Lys-Gly) (interchain with G-Cter in SUMO2)). Residues D548–N572 form a disordered region. Positions K566–R570 match the Nuclear localization signal motif.

Belongs to the metallo-beta-lactamase superfamily. RNA-metabolizing metallo-beta-lactamase-like family. INTS9 subfamily. Component of the Integrator complex, composed of core subunits INTS1, INTS2, INTS3, INTS4, INTS5, INTS6, INTS7, INTS8, INTS9/RC74, INTS10, INTS11/CPSF3L, INTS12, INTS13, INTS14 and INTS15. The core complex associates with protein phosphatase 2A subunits PPP2CA and PPP2R1A, to form the Integrator-PP2A (INTAC) complex. INTS9 is part of the RNA endonuclease subcomplex, composed of INTS4, INTS9, INTS11 and inositol hexakisphosphate (InsP6). Interacts with WDR73; interaction is required for the assembly of the RNA endonuclease subcomplex in the cytoplasm. Interacts with BRAT1; interaction is required for the assembly of the RNA endonuclease subcomplex. Interacts with ESRRB, ESRRB is not a core component of the Integrator complex and this association is a bridge for the interaction with the multiprotein complex Integrator; attracts the transcriptional machinery.

Its subcellular location is the nucleus. The protein resides in the cytoplasm. Its function is as follows. Component of the integrator complex, a multiprotein complex that terminates RNA polymerase II (Pol II) transcription in the promoter-proximal region of genes. The integrator complex provides a quality checkpoint during transcription elongation by driving premature transcription termination of transcripts that are unfavorably configured for transcriptional elongation: the complex terminates transcription by (1) catalyzing dephosphorylation of the C-terminal domain (CTD) of Pol II subunit POLR2A/RPB1 and SUPT5H/SPT5, (2) degrading the exiting nascent RNA transcript via endonuclease activity and (3) promoting the release of Pol II from bound DNA. The integrator complex is also involved in terminating the synthesis of non-coding Pol II transcripts, such as enhancer RNAs (eRNAs), small nuclear RNAs (snRNAs), telomerase RNAs and long non-coding RNAs (lncRNAs). Mediates recruitment of cytoplasmic dynein to the nuclear envelope, probably as component of the integrator complex. This chain is Integrator complex subunit 9 (Ints9), found in Mus musculus (Mouse).